The following is a 226-amino-acid chain: Probable GPI-anchored adhesin-like protein PGA28 (226 aa).

The first 26 residues, 1-26 (MKFFAYFAVIALSSASLINLFKRATA), serve as a signal peptide directing secretion. A disordered region spans residues 119–209 (DTEATTGSDT…SQQTSSHAGG (91 aa)). Residues 131-148 (KAATGATTSAGTGVTKTS) are compositionally biased toward low complexity. Residues 149–160 (ETGGVSSTANSE) show a composition bias toward polar residues. Residues 161-208 (AKSGSVTTSKSGSTSISESKTTSGSSSSGKSSSSTSSASSQQTSSHAG) show a composition bias toward low complexity. Serine 197 is lipidated: GPI-anchor amidated serine. The propeptide at 198 to 226 (ASSQQTSSHAGGASGAFVSLLGLFAALLI) is removed in mature form.

In terms of processing, predicted to be a cleavage substrate for KEX2.

The protein localises to the cell membrane. Putative adhesin which is involved in cell adhesion and virulence. Plays a role in Candida-bacterial interactions and subsequent regulation of filamentation. The protein is Probable GPI-anchored adhesin-like protein PGA28 (PGA28) of Candida albicans (strain SC5314 / ATCC MYA-2876) (Yeast).